The following is a 411-amino-acid chain: Argininosuccinate lyase (411 aa).

This sequence belongs to the lyase 1 family. Argininosuccinate lyase subfamily.

Its subcellular location is the cytoplasm. It carries out the reaction 2-(N(omega)-L-arginino)succinate = fumarate + L-arginine. Its pathway is amino-acid biosynthesis; L-arginine biosynthesis; L-arginine from L-ornithine and carbamoyl phosphate: step 3/3. This Legionella pneumophila (strain Lens) protein is Argininosuccinate lyase.